A 588-amino-acid chain; its full sequence is Adenine deaminase (588 aa).

The protein belongs to the metallo-dependent hydrolases superfamily. Adenine deaminase family. Homodimer. The cofactor is Mn(2+).

It catalyses the reaction adenine + H2O + H(+) = hypoxanthine + NH4(+). This is Adenine deaminase from Escherichia coli (strain SMS-3-5 / SECEC).